A 218-amino-acid chain; its full sequence is Putative copper transporter crmD (218 aa).

2 consecutive transmembrane segments (helical) span residues 37 to 57 (YSLT…LGVL) and 176 to 196 (MLAV…GIVV).

The protein belongs to the copper transporter (Ctr) (TC 1.A.56) family. SLC31A subfamily.

It localises to the membrane. It catalyses the reaction Cu(2+)(in) = Cu(2+)(out). Its function is as follows. Putative copper transporter; part of the crm gene cluster that mediates the biosynthesis of a yet unidentified copper-responsive metabolite. Probably involved in the transport of copper, even if it does not act as a major copper transporter. In contrast to crmA, is not involved in the biosynthesis of fumivalines or fumicicolins. This is Putative copper transporter crmD from Aspergillus fumigatus (strain ATCC MYA-4609 / CBS 101355 / FGSC A1100 / Af293) (Neosartorya fumigata).